The chain runs to 579 residues: ERV-BabFcenv provirus ancestral Env polyprotein (579 aa).

An N-terminal signal peptide occupies residues 1-22 (MISAVLNLPSTPLLPLLWFTLI). Residues 23-387 (IPASLTNPKF…LSSSNNIQKQ (365 aa)) are surface protein. The Extracellular segment spans residues 23-523 (IPASLTNPKF…VWLLPVVQQM (501 aa)). N-linked (GlcNAc...) asparagine glycans are attached at residues asparagine 135, asparagine 203, asparagine 242, and asparagine 251. The short motif at 255 to 258 (CFLC) is the CXXC element. N-linked (GlcNAc...) asparagine glycans are attached at residues asparagine 276, asparagine 312, and asparagine 337. The interval 388–408 (AVFLPLIIGVSLASSLVASGL) is fusion peptide. A transmembrane protein region spans residues 388-579 (AVFLPLIIGV…LPTSDPNYAP (192 aa)). Residues 453 to 469 (AQNRRALDLLTAEKGGT) carry the CKS-17 motif. Residues cysteine 470 and cysteine 477 are joined by a disulfide bond. The CX6CC signature appears at 470 to 478 (CLFLGEECC). N-linked (GlcNAc...) asparagine glycosylation occurs at asparagine 482. The chain crosses the membrane as a helical span at residues 524–544 (LPFLIPILILCLMLCLAPILI). The Cytoplasmic portion of the chain corresponds to 545–579 (KFLRARVQEITRVTFNQMLLHPYTQLPTSDPNYAP).

Belongs to the gamma type-C retroviral envelope protein family. HERV class-I F(c)1 env subfamily. In terms of processing, specific enzymatic cleavages in vivo yield the mature SU and TM proteins. The CXXC motif is highly conserved across a broad range of retroviral envelope proteins. It is thought to participate in the formation of a labile disulfide bond possibly with the CX6CC motif present in the transmembrane domain.

It localises to the cell membrane. Its function is as follows. Retroviral envelope proteins mediate receptor recognition and membrane fusion during early infection. Endogenous envelope proteins may have kept, lost or modified their original function during evolution. This Papio anubis (Olive baboon) protein is ERV-BabFcenv provirus ancestral Env polyprotein.